Consider the following 162-residue polypeptide: uncharacterized protein (162 aa).

This sequence belongs to the LOR family.

This is an uncharacterized protein from Bacillus subtilis (strain 168).